Here is a 123-residue protein sequence, read N- to C-terminus: MIVGTGVDIVDIARFERQLERTPRLRERLFVPHERELAPRSLAARFAVKEAAAKALLAPPGMIWQDCWVSNDEHGAPHLHTTGTVARQQRARGVDTWHVSISHDGGMAVAFVVAEAQEGSRDD.

Mg(2+) is bound by residues D8 and E50.

Belongs to the P-Pant transferase superfamily. AcpS family. The cofactor is Mg(2+).

It is found in the cytoplasm. The enzyme catalyses apo-[ACP] + CoA = holo-[ACP] + adenosine 3',5'-bisphosphate + H(+). Transfers the 4'-phosphopantetheine moiety from coenzyme A to a Ser of acyl-carrier-protein. The chain is Holo-[acyl-carrier-protein] synthase from Kocuria rhizophila (strain ATCC 9341 / DSM 348 / NBRC 103217 / DC2201).